A 329-amino-acid polypeptide reads, in one-letter code: Mas-related G-protein coupled receptor member X2 (329 aa).

Over 1 to 33 the chain is Extracellular; that stretch reads MDPTTPAWRTESTTMNGNDQALPLLCGKEILIS. A helical transmembrane segment spans residues 34 to 54; that stretch reads VFLILFIALVGLVGNGFVLWL. The Cytoplasmic segment spans residues 55-63; it reads LGFRMRRNA. Residues 64 to 84 traverse the membrane as a helical segment; sequence FSVYVLSLAGADFLFLCFQII. Topologically, residues 85-96 are extracellular; sequence NCLVYLSNFFCS. Residues 97–117 traverse the membrane as a helical segment; the sequence is SSINFPSFFTTVMTCAYLAGL. Over 118–144 the chain is Cytoplasmic; sequence SMLSTISTERCLSVLWPIWYRCRRPRH. The helical transmembrane segment at 145–165 threads the bilayer; sequence LSAVACVLLWALSLLLSILEG. At 166 to 183 the chain is on the extracellular side; sequence KFCGLFGDGDSGWCQTFD. The chain crosses the membrane as a helical span at residues 184-204; that stretch reads LITAAWLIFLFMVLCGSSLAL. Residues 205-227 are Cytoplasmic-facing; it reads LVRILCGSRGLPLTRLYLTILLT. The helical transmembrane segment at 228–248 threads the bilayer; sequence VLVFLLCGLPFGIQWFLILWI. Topologically, residues 249-263 are extracellular; that stretch reads WKNSDVLFCHIHPVS. Residues 264-284 traverse the membrane as a helical segment; the sequence is VVLSSLNSSANPIIYFFVGSF. Over 285-329 the chain is Cytoplasmic; sequence RKQWQLQQPILKLALQRALQDIAEVDHSEGCFRQGTPEMSRSSLV.

Belongs to the G-protein coupled receptor 1 family. Mas subfamily.

The protein resides in the cell membrane. Mast cell-specific receptor for basic secretagogues, i.e. cationic amphiphilic drugs, as well as endo- or exogenous peptides, consisting of a basic head group and a hydrophobic core. Recognizes and binds small molecules containing a cyclized tetrahydroisoquinoline (THIQ), such as non-steroidal neuromuscular blocking drugs (NMBDs), including tubocurarine and atracurium. In response to these compounds, mediates pseudo-allergic reactions characterized by histamine release, inflammation and airway contraction. The chain is Mas-related G-protein coupled receptor member X2 (MRGPRX2) from Gorilla gorilla gorilla (Western lowland gorilla).